We begin with the raw amino-acid sequence, 325 residues long: Reticulocalbin-1 (325 aa).

The N-terminal stretch at 1–23 (MARGGRLGLALGLLLALVLALRA) is a signal peptide. Asparagine 47 is a glycosylation site (N-linked (GlcNAc...) asparagine; partial). Serine 49 and serine 74 each carry phosphoserine. EF-hand domains are found at residues 73–108 (ESKERLGKIVDRIDSDGDGLVTTEELKLWIKRVQKR), 109–144 (YIYDNVAKVWKDYDRDKDEKISWEEYKQATYGYYLG), 160–195 (KMLPRDERRFKASDLDGDLTATREEFTAFLHPEEFE), 197–232 (MKEIVVLETLEDIDKNGDGFVDQDEYIADMFSHEDN), 238–273 (WVLSEREQFNDFRDLNKDGKLDKDEIRHWILPQDYD), and 274–309 (HAQAEARHLVYESDKNKDEMLTKEEILDNWNMFVGS). Ca(2+) contacts are provided by aspartate 86, aspartate 88, aspartate 90, glutamate 97, aspartate 122, aspartate 124, aspartate 126, lysine 128, glutamate 133, aspartate 173, aspartate 175, aspartate 177, threonine 179, glutamate 184, aspartate 210, asparagine 212, aspartate 214, glutamate 221, aspartate 251, asparagine 253, aspartate 255, lysine 257, glutamate 262, aspartate 287, asparagine 289, aspartate 291, methionine 293, and glutamate 298. A Prevents secretion from ER motif is present at residues 322–325 (HDEL).

Belongs to the CREC family. O-glycosylated. O-mannosylated by POMT1 and POMT2 and elongated by POMGNT1.

The protein localises to the endoplasmic reticulum lumen. In terms of biological role, may regulate calcium-dependent activities in the endoplasmic reticulum lumen or post-ER compartment. In Mus musculus (Mouse), this protein is Reticulocalbin-1 (Rcn1).